The chain runs to 269 residues: Putative ankyrin repeat protein L23 (269 aa).

ANK repeat units follow at residues 118–147 (EDDY…DIKS), 148–177 (DGDY…DIRA), 179–207 (NDYA…NIRE), 208–237 (QNDY…DIRA), and 238–267 (DNDC…DIRA).

The sequence is that of Putative ankyrin repeat protein L23 from Acanthamoeba polyphaga (Amoeba).